A 249-amino-acid chain; its full sequence is ATP synthase subunit a (249 aa).

Transmembrane regions (helical) follow at residues 30-50 (SAYMLLAVAIISLLMIGGSAG), 84-104 (FFPLVFSLFMFIMVSNMVGII), 113-133 (HIIVTAALAFLVFFTVLIYGF), 143-163 (IFVPSGVPGFILPLVVFIEVF), 196-216 (LLAGLGIAGYFGAVLPLGMVV), and 221-241 (LELLVAFLQAYVFAILTCIYL).

The protein belongs to the ATPase A chain family. F-type ATPases have 2 components, CF(1) - the catalytic core - and CF(0) - the membrane proton channel. CF(1) has five subunits: alpha(3), beta(3), gamma(1), delta(1), epsilon(1). CF(0) has four main subunits: a, b, b' and c.

The protein resides in the cell inner membrane. Key component of the proton channel; it plays a direct role in the translocation of protons across the membrane. This chain is ATP synthase subunit a, found in Rhodopseudomonas palustris (strain BisA53).